The sequence spans 333 residues: Dioxygenase cnsJ (333 aa).

Fe cation contacts are provided by His153, Asp155, and His235. The disordered stretch occupies residues 309-333 (NAQPEGEDDGGMKPNEGEHVVEAQI). Residues 323–333 (NEGEHVVEAQI) are compositionally biased toward basic and acidic residues.

Belongs to the PhyH family. In terms of assembly, homodimer. Fe cation is required as a cofactor.

It functions in the pathway alkaloid biosynthesis. Its function is as follows. Dioxygenase; part of the gene cluster that mediates the biosynthesis of communesins, a prominent class of indole alkaloids with great potential as pharmaceuticals. Communesins are biosynthesized by the coupling of tryptamine and aurantioclavine, two building blocks derived from L-tryptophan. The L-tryptophan decarboxylase cnsB converts L-tryptophan to tryptamine, whereas the tryptophan dimethylallyltransferase cnsF converts L-tryptophan to 4-dimethylallyl tryptophan which is further transformed to aurantioclavine by the aurantioclavine synthase cnsA, probably aided by the catalase cnsD. The cytochrome P450 monooxygenase cnsC catalyzes the heterodimeric coupling between the two different indole moieties, tryptamine and aurantioclavine, to construct vicinal quaternary stereocenters and yield the heptacyclic communesin scaffold. The O-methyltransferase cnsE then methylates the communesin scaffold to produce communesin K, the simplest characterized communesin that contains the heptacyclic core. The dioxygenase cnsJ converts communesin K into communesin I. Acylation to introduce the hexadienyl group at position N16 of communesin I by the acyltransferase cnsK leads to the production of communesin B. The hexadienyl group is produced by the highly reducing polyketide synthase cnsI, before being hydrolytically removed from cnsI by the serine hydrolase cnsH, converted into hexadienyl-CoA by the CoA ligase cnsG, and then transferred to communesin I by cnsK. Surprisingly, cnsK may also be a promiscuous acyltransferase that can tolerate a range of acyl groups, including acetyl-, propionyl-, and butyryl-CoA, which lead to communesins A, G and H respectively. The roles of the alpha-ketoglutarate-dependent dioxygenases cnsM and cnsP have still to be determined. The sequence is that of Dioxygenase cnsJ from Penicillium expansum (Blue mold rot fungus).